Consider the following 343-residue polypeptide: DNA-directed RNA polymerase subunit alpha (343 aa).

The segment at 1 to 236 is alpha N-terminal domain (alpha-NTD); it reads MQEHYYKFWR…EQLQIFLTFD (236 aa). The segment at 253 to 343 is alpha C-terminal domain (alpha-CTD); sequence LNENLFRSVD…QPPQKRETQQ (91 aa).

Belongs to the RNA polymerase alpha chain family. As to quaternary structure, homodimer. The RNAP catalytic core consists of 2 alpha, 1 beta, 1 beta' and 1 omega subunit. When a sigma factor is associated with the core the holoenzyme is formed, which can initiate transcription.

The enzyme catalyses RNA(n) + a ribonucleoside 5'-triphosphate = RNA(n+1) + diphosphate. Its function is as follows. DNA-dependent RNA polymerase catalyzes the transcription of DNA into RNA using the four ribonucleoside triphosphates as substrates. The polypeptide is DNA-directed RNA polymerase subunit alpha (Bdellovibrio bacteriovorus (strain ATCC 15356 / DSM 50701 / NCIMB 9529 / HD100)).